We begin with the raw amino-acid sequence, 602 residues long: Glutathione-regulated potassium-efflux system protein KefB (602 aa).

The next 13 membrane-spanning stretches (helical) occupy residues 4–24, 29–49, 55–75, 87–107, 115–135, 152–172, 181–201, 207–227, 230–250, 261–281, 296–318, 326–346, and 356–376; these read TGLL…VPIA, IGAV…GLGF, EILH…GLEL, IFGV…ALLY, AAVI…LQLM, VLLF…ILAG, VKIG…RYLL, YIVA…VVLG, LFMD…GILL, IAIE…VGMA, LGVL…VFGL, FAGV…AAFS, and ALLL…MQVI. Residues 400–519 form the RCK N-terminal domain; the sequence is DPQVIIVGFG…NGVKDFTRET (120 aa).

The protein belongs to the monovalent cation:proton antiporter 2 (CPA2) transporter (TC 2.A.37) family. KefB subfamily. As to quaternary structure, interacts with the regulatory subunit KefG.

The protein resides in the cell inner membrane. In terms of biological role, pore-forming subunit of a potassium efflux system that confers protection against electrophiles. Catalyzes K(+)/H(+) antiport. The chain is Glutathione-regulated potassium-efflux system protein KefB from Yersinia pestis bv. Antiqua (strain Antiqua).